We begin with the raw amino-acid sequence, 497 residues long: Zinc metalloproteinase nas-28 (497 aa).

The N-terminal stretch at 1–14 (MFFPVVFFIPFVLG) is a signal peptide. A propeptide spanning residues 15-120 (APTQKALEKI…IENGNYRSKR (106 aa)) is cleaved from the precursor. N76 is a glycosylation site (N-linked (GlcNAc...) asparagine). The Peptidase M12A domain maps to 121–319 (QAIVDTTNFW…IGVNKLYNCT (199 aa)). 7 disulfide bridges follow: C164-C318, C185-C206, C328-C339, C331-C342, C344-C353, C364-C398, and C427-C447. Residue H214 participates in Zn(2+) binding. E215 is an active-site residue. The Zn(2+) site is built by H218 and H224. The N-linked (GlcNAc...) asparagine glycan is linked to N317. In terms of domain architecture, EGF-like spans 324 to 354 (IQMKCSNCGITDSRNCNQCKCPRYFTGASCD). The 120-residue stretch at 364–483 (CNGAVLQATS…LTFSIQYRAV (120 aa)) folds into the CUB domain. Residue N394 is glycosylated (N-linked (GlcNAc...) asparagine).

It depends on Zn(2+) as a cofactor.

It localises to the secreted. Metalloprotease. The chain is Zinc metalloproteinase nas-28 (nas-28) from Caenorhabditis elegans.